The chain runs to 813 residues: MAKELSQEEVLDFLCQSGGKVANASLLVHFKRFLRDPQAADAVLLKRRDKFKRYINSVAVVRQEGSVKYVVLRNRYQDLLGEDIEPAAAEDAGSEGERDQVVLPTEHGQDYLAHTFGQERLKQANGGDVICDCSEARAVVPSAAPHSHSQSWDVGESMSEKARVNPSHWDTKRYYPEDPPVPDSLPVSPPCTNTRQSSFTSTSRPHNHSLSSNNLSSSFSSPESPGLVAKPYNASPSPAGSSPNIREQTPKSQSLSKAANAAFVSVTCTDIKEQREGCTELLAPQPCQNWDYSQPEQLHSAQEHHSDLHREHMTNGFHSPDPLSSKYPHLTSPCTPLQLSPETDTTPDVPLAHNLAAVSYPSPPLPGNNMYGMWMCQIPVFKSIRCQLSLQDLDDFVDQETCGSEESDSGEGGDCDTEPRDNDDADDDTFSSDSHKEIPKLCVEQESEYLHKCHSNIDYSGKNDLYNSLLEEDRIGVKDTLVEHGDVASMRIDTSKSVYTAKSFLTDQAPILFELVRNAPPNKTSSCFQGALSSSDEELLDRDYRKRRRSSRYKKSANVSVPCVQPDTDRLLTAKCVSSSSFLINNNLQEQSTQAQFLPKYNSNFGLKKSASQKSSVVPLDPKEHDWIVKTAAGLWIQVYGMFSMDPHLALHKDFITGYTALHWFAKHGCIDLFNKVVIGAKKAGIELDMNVKSSNGYTPLHIAAIHGHHKVAIMLVEKLKVNVKVRDNSGKRAWQYLNSATSGDVWQLLGAPKGKTIFASCALHTAQNLNIRNKTSSQLARKSSLAAFRKTQHQRRKANNQSFLREREIYSD.

Disordered regions lie at residues 142–256 and 400–436; these read SAAP…QSLS and ETCG…DSHK. Basic and acidic residues predominate over residues 158–176; sequence MSEKARVNPSHWDTKRYYP. The span at 177 to 189 shows a compositional bias: pro residues; the sequence is EDPPVPDSLPVSP. Polar residues predominate over residues 191 to 202; it reads CTNTRQSSFTST. Residues 208 to 244 are compositionally biased toward low complexity; it reads HSLSSNNLSSSFSSPESPGLVAKPYNASPSPAGSSPN. Positions 245-256 are enriched in polar residues; that stretch reads IREQTPKSQSLS. Acidic residues predominate over residues 400–416; that stretch reads ETCGSEESDSGEGGDCD. ANK repeat units lie at residues 657–686 and 696–726; these read TGYT…KAGI and NGYT…NVKV.

This sequence belongs to the SOWAH family.

In Xenopus laevis (African clawed frog), this protein is Ankyrin repeat domain-containing protein SOWAHB (sowahb).